Here is a 476-residue protein sequence, read N- to C-terminus: Aspartyl/glutamyl-tRNA(Asn/Gln) amidotransferase subunit B (476 aa).

This sequence belongs to the GatB/GatE family. GatB subfamily. As to quaternary structure, heterotrimer of A, B and C subunits.

The enzyme catalyses L-glutamyl-tRNA(Gln) + L-glutamine + ATP + H2O = L-glutaminyl-tRNA(Gln) + L-glutamate + ADP + phosphate + H(+). The catalysed reaction is L-aspartyl-tRNA(Asn) + L-glutamine + ATP + H2O = L-asparaginyl-tRNA(Asn) + L-glutamate + ADP + phosphate + 2 H(+). Its function is as follows. Allows the formation of correctly charged Asn-tRNA(Asn) or Gln-tRNA(Gln) through the transamidation of misacylated Asp-tRNA(Asn) or Glu-tRNA(Gln) in organisms which lack either or both of asparaginyl-tRNA or glutaminyl-tRNA synthetases. The reaction takes place in the presence of glutamine and ATP through an activated phospho-Asp-tRNA(Asn) or phospho-Glu-tRNA(Gln). The protein is Aspartyl/glutamyl-tRNA(Asn/Gln) amidotransferase subunit B of Bacillus velezensis (strain DSM 23117 / BGSC 10A6 / LMG 26770 / FZB42) (Bacillus amyloliquefaciens subsp. plantarum).